Reading from the N-terminus, the 847-residue chain is B-cell receptor CD22 (847 aa).

The N-terminal stretch at 1-19 is a signal peptide; it reads MHLLGPWLLLLVLEYLAFS. The region spanning 20–138 is the Ig-like V-type domain; it reads DSSKWVFEHP…MERIHLNVSE (119 aa). The Extracellular portion of the chain corresponds to 20 to 687; the sequence is DSSKWVFEHP…YYSPETIGRR (668 aa). Intrachain disulfides connect cysteine 39–cysteine 167, cysteine 44–cysteine 102, and cysteine 161–cysteine 219. N-linked (GlcNAc...) asparagine glycosylation is found at asparagine 67, asparagine 101, and asparagine 112. Arginine 120 serves as a coordination point for N-acetylneuraminate. Residues asparagine 135, asparagine 164, and asparagine 231 are each glycosylated (N-linked (GlcNAc...) asparagine). Ig-like C2-type domains are found at residues 143 to 235, 242 to 326, 331 to 416, 419 to 500, 505 to 582, and 593 to 676; these read PHIQ…DTVQ, PKLE…VFLQ, PEPS…LDVQ, PKKV…VALN, PRDV…QTAS, and PRRL…STLT. 4 cysteine pairs are disulfide-bonded: cysteine 265-cysteine 309, cysteine 353-cysteine 396, cysteine 442-cysteine 484, and cysteine 529-cysteine 571. N-linked (GlcNAc...) asparagine glycans are attached at residues asparagine 363, asparagine 445, and asparagine 479. N-linked (GlcNAc...) asparagine glycans are attached at residues asparagine 574 and asparagine 634. A disulfide bridge connects residues cysteine 616 and cysteine 659. A helical transmembrane segment spans residues 688 to 706; it reads VAVGLGSCLAILILAICGL. Residues 707 to 847 lie on the Cytoplasmic side of the membrane; the sequence is KLQRRWKRTQ…ENVDYVILKH (141 aa). A phosphoserine mark is found at serine 725, serine 726, and serine 729. Short sequence motifs (ITIM motif) lie at residues 760-765 and 794-799; these read ISYTTL and VTYSAL. Position 762 is a phosphotyrosine (tyrosine 762). A phosphotyrosine mark is found at tyrosine 807, tyrosine 822, and tyrosine 842. Short sequence motifs (ITIM motif) lie at residues 820 to 825 and 840 to 845; these read IHYSEL and VDYVIL.

This sequence belongs to the immunoglobulin superfamily. SIGLEC (sialic acid binding Ig-like lectin) family. Predominantly monomer of isoform CD22-beta. Also found as heterodimer of isoform CD22-beta and a shorter isoform. Interacts with PTPN6/SHP-1, LYN, SYK, PIK3R1/PIK3R2 and PLCG1 upon phosphorylation. Interacts with GRB2, INPP5D and SHC1 upon phosphorylation. May form a complex with INPP5D/SHIP, GRB2 and SHC1. In terms of processing, phosphorylation of Tyr-762, Tyr-807 and Tyr-822 are involved in binding to SYK, GRB2 and SYK, respectively. Phosphorylation of Tyr-842 is involved in binding to SYK, PLCG2 and PIK3R1/PIK3R2. Phosphorylated on tyrosine residues by LYN. As to expression, B-lymphocytes.

It is found in the cell membrane. Functionally, most highly expressed siglec (sialic acid-binding immunoglobulin-like lectin) on B-cells that plays a role in various aspects of B-cell biology including differentiation, antigen presentation, and trafficking to bone marrow. Binds to alpha 2,6-linked sialic acid residues of surface molecules such as CD22 itself, CD45 and IgM in a cis configuration. Can also bind to ligands on other cells as an adhesion molecule in a trans configuration. Acts as an inhibitory coreceptor on the surface of B-cells and inhibits B-cell receptor induced signaling, characterized by inhibition of the calcium mobilization and cellular activation. Mechanistically, the immunoreceptor tyrosine-based inhibitory motif domain is phosphorylated by the Src kinase LYN, which in turn leads to the recruitment of the protein tyrosine phosphatase 1/PTPN6, leading to the negative regulation of BCR signaling. If this negative signaling from is of sufficient strength, apoptosis of the B-cell can be induced. The sequence is that of B-cell receptor CD22 from Homo sapiens (Human).